The following is a 319-amino-acid chain: ATP-dependent 6-phosphofructokinase (319 aa).

G11 provides a ligand contact to ATP. Residue 21 to 25 participates in ADP binding; the sequence is RAVTR. ATP is bound by residues 72-73 and 102-105; these read RF and GDGS. D103 provides a ligand contact to Mg(2+). Residue 125–127 participates in substrate binding; it reads SID. The active-site Proton acceptor is the D127. R154 is a binding site for ADP. Substrate is bound by residues R162 and 169 to 171; that span reads MGR. ADP contacts are provided by residues 185–187 and 213–215; these read GAD and KKH. Residues E222, R243, and 249-252 each bind substrate; that span reads HMQR.

The protein belongs to the phosphofructokinase type A (PFKA) family. ATP-dependent PFK group I subfamily. Prokaryotic clade 'B1' sub-subfamily. Homotetramer. The cofactor is Mg(2+).

Its subcellular location is the cytoplasm. It carries out the reaction beta-D-fructose 6-phosphate + ATP = beta-D-fructose 1,6-bisphosphate + ADP + H(+). It participates in carbohydrate degradation; glycolysis; D-glyceraldehyde 3-phosphate and glycerone phosphate from D-glucose: step 3/4. With respect to regulation, allosterically activated by ADP and other diphosphonucleosides, and allosterically inhibited by phosphoenolpyruvate. In terms of biological role, catalyzes the phosphorylation of D-fructose 6-phosphate to fructose 1,6-bisphosphate by ATP, the first committing step of glycolysis. The chain is ATP-dependent 6-phosphofructokinase from Lactobacillus johnsonii (strain CNCM I-12250 / La1 / NCC 533).